The following is a 621-amino-acid chain: 1-deoxy-D-xylulose-5-phosphate synthase (621 aa).

Residues His76 and 117–119 each bind thiamine diphosphate; that span reads AHS. Asp148 provides a ligand contact to Mg(2+). Thiamine diphosphate is bound by residues 149 to 150, Asn178, Tyr285, and Glu367; that span reads GA. Residue Asn178 participates in Mg(2+) binding.

Belongs to the transketolase family. DXPS subfamily. Homodimer. Mg(2+) serves as cofactor. The cofactor is thiamine diphosphate.

The enzyme catalyses D-glyceraldehyde 3-phosphate + pyruvate + H(+) = 1-deoxy-D-xylulose 5-phosphate + CO2. The protein operates within metabolic intermediate biosynthesis; 1-deoxy-D-xylulose 5-phosphate biosynthesis; 1-deoxy-D-xylulose 5-phosphate from D-glyceraldehyde 3-phosphate and pyruvate: step 1/1. Catalyzes the acyloin condensation reaction between C atoms 2 and 3 of pyruvate and glyceraldehyde 3-phosphate to yield 1-deoxy-D-xylulose-5-phosphate (DXP). In Aromatoleum aromaticum (strain DSM 19018 / LMG 30748 / EbN1) (Azoarcus sp. (strain EbN1)), this protein is 1-deoxy-D-xylulose-5-phosphate synthase.